A 706-amino-acid polypeptide reads, in one-letter code: SPX domain-containing membrane protein Os09g0521800 (706 aa).

An SPX domain is found at 2 to 145; the sequence is VNFSNKLTKD…GYKFTDYYVR (144 aa). Transmembrane regions (helical) follow at residues 251-271, 281-301, 318-338, 340-359, 378-398, and 414-434; these read MSLV…YIVV, LGAA…AQVF, LLFS…AFDL, SLTI…ARAV, AAFV…AGLL, and LPGW…WILF. The segment at 475-498 is disordered; it reads SEQDEEDDNGDEEHNETLSSSTTT. Acidic residues predominate over residues 476 to 488; the sequence is EQDEEDDNGDEEH. The next 5 helical transmembrane spans lie at 520-540, 554-574, 583-603, 611-631, and 678-698; these read LLIY…SSVV, VFLA…GTYI, ILVA…KLTV, VCSA…NLSL, and LLNA…AATL.

It belongs to the major facilitator superfamily.

It localises to the membrane. This is SPX domain-containing membrane protein Os09g0521800 from Oryza sativa subsp. japonica (Rice).